The primary structure comprises 638 residues: DNA gyrase subunit B (638 aa).

Residues 431–545 form the Toprim domain; it reads RELFIVEGNS…YGFVYIAQPP (115 aa). Mg(2+)-binding residues include E437, D510, and D512.

Belongs to the type II topoisomerase GyrB family. In terms of assembly, heterotetramer, composed of two GyrA and two GyrB chains. In the heterotetramer, GyrA contains the active site tyrosine that forms a transient covalent intermediate with DNA, while GyrB binds cofactors and catalyzes ATP hydrolysis. Mg(2+) is required as a cofactor. Requires Mn(2+) as cofactor. The cofactor is Ca(2+).

It localises to the cytoplasm. It catalyses the reaction ATP-dependent breakage, passage and rejoining of double-stranded DNA.. Its function is as follows. A type II topoisomerase that negatively supercoils closed circular double-stranded (ds) DNA in an ATP-dependent manner to modulate DNA topology and maintain chromosomes in an underwound state. Negative supercoiling favors strand separation, and DNA replication, transcription, recombination and repair, all of which involve strand separation. Also able to catalyze the interconversion of other topological isomers of dsDNA rings, including catenanes and knotted rings. Type II topoisomerases break and join 2 DNA strands simultaneously in an ATP-dependent manner. This is DNA gyrase subunit B from Metamycoplasma arthritidis (Mycoplasma arthritidis).